Reading from the N-terminus, the 268-residue chain is Diaminopimelate epimerase (268 aa).

Positions 13, 46, and 64 each coordinate substrate. The active-site Proton donor is C73. Substrate contacts are provided by residues 74–75 (GN), N148, N181, and 199–200 (ER). C208 serves as the catalytic Proton acceptor. 209–210 (GT) is a binding site for substrate.

The protein belongs to the diaminopimelate epimerase family. Homodimer.

Its subcellular location is the cytoplasm. It catalyses the reaction (2S,6S)-2,6-diaminopimelate = meso-2,6-diaminopimelate. Its pathway is amino-acid biosynthesis; L-lysine biosynthesis via DAP pathway; DL-2,6-diaminopimelate from LL-2,6-diaminopimelate: step 1/1. In terms of biological role, catalyzes the stereoinversion of LL-2,6-diaminopimelate (L,L-DAP) to meso-diaminopimelate (meso-DAP), a precursor of L-lysine and an essential component of the bacterial peptidoglycan. This is Diaminopimelate epimerase from Sphingopyxis alaskensis (strain DSM 13593 / LMG 18877 / RB2256) (Sphingomonas alaskensis).